The sequence spans 117 residues: Conotoxin vil14a (117 aa).

Residues 1 to 22 form the signal peptide; it reads MGFRVLVLVVMATTSALPFTFS. Residues 23–90 constitute a propeptide that is removed on maturation; sequence EEPGRSPFRP…FAETPVGQKR (68 aa). The disordered stretch occupies residues 53 to 86; it reads RADGQPPDMRQPEMRRPEMRRPEVRQPEFAETPV. Over residues 62-80 the composition is skewed to basic and acidic residues; that stretch reads RQPEMRRPEMRRPEVRQPE. Intrachain disulfides connect Cys-96–Cys-116 and Cys-100–Cys-112.

This sequence belongs to the conotoxin R superfamily. In terms of tissue distribution, expressed by the venom duct.

The protein resides in the secreted. The sequence is that of Conotoxin vil14a from Conus villepinii (Villepin's cone).